A 1102-amino-acid chain; its full sequence is Phosphatidylinositol 4,5-bisphosphate 3-kinase catalytic subunit gamma isoform (1102 aa).

The PI3K-ABD domain occupies 34-141 (SMELIPIEFV…PGQIHLVQRH (108 aa)). The region spanning 217–309 (NNCIFIVIHR…GEEIHVVLDT (93 aa)) is the PI3K-RBD domain. The 165-residue stretch at 357–521 (CDRKFRVKIR…NSMSISILLD (165 aa)) folds into the C2 PI3K-type domain. The PIK helical domain occupies 541-723 (DRVRAEMPNQ…AVILEAYLRG (183 aa)). Residues 797–1080 (AIEKCKVMAS…QIEVCRDKGW (284 aa)) enclose the PI3K/PI4K catalytic domain. The interval 803 to 809 (VMASKKK) is G-loop. ATP contacts are provided by residues 829–838 (GIIFKHGDDL) and 864–872 (LLPYGCIST). The tract at residues 943 to 951 (GIGDRHNDN) is catalytic loop. 961-969 (FHIDFGHIL) contributes to the ATP binding site. Residues 962-988 (HIDFGHILGNYKSFLGINKERVPFVLT) are activation loop. Thr1024 is subject to Phosphothreonine; by PKA. Ser1101 bears the Phosphoserine; by autocatalysis mark.

Belongs to the PI3/PI4-kinase family. As to quaternary structure, heterodimer of a catalytic subunit PIK3CG and a PIK3R5 or PIK3R6 regulatory subunit. Interacts with GRK2 through the PIK helical domain. Interaction with GRK2 is required for targeting to agonist-occupied receptor. Interacts with PDE3B; regulates PDE3B activity and thereby cAMP levels in cells. Interacts with TPM2. Interacts with EPHA8; regulates integrin-mediated cell adhesion to substrate. Interacts with HRAS; the interaction is required for membrane recruitment and beta-gamma G protein dimer-dependent activation of the PI3K gamma complex PIK3CG:PIK3R6. Autophosphorylation at Ser-1101 has no effect on the phosphatidylinositol-4,5-bisphosphate 3-kinase activity. As to expression, pancreas, skeletal muscle, liver and heart.

Its subcellular location is the cytoplasm. The protein localises to the cell membrane. It catalyses the reaction a 1,2-diacyl-sn-glycero-3-phospho-(1D-myo-inositol) + ATP = a 1,2-diacyl-sn-glycero-3-phospho-(1D-myo-inositol-3-phosphate) + ADP + H(+). The enzyme catalyses a 1,2-diacyl-sn-glycero-3-phospho-(1D-myo-inositol-4,5-bisphosphate) + ATP = a 1,2-diacyl-sn-glycero-3-phospho-(1D-myo-inositol-3,4,5-trisphosphate) + ADP + H(+). The catalysed reaction is a 1,2-diacyl-sn-glycero-3-phospho-(1D-myo-inositol 4-phosphate) + ATP = a 1,2-diacyl-sn-glycero-3-phospho-(1D-myo-inositol-3,4-bisphosphate) + ADP + H(+). It carries out the reaction L-seryl-[protein] + ATP = O-phospho-L-seryl-[protein] + ADP + H(+). Its pathway is phospholipid metabolism; phosphatidylinositol phosphate biosynthesis. With respect to regulation, activated by both the alpha and the beta-gamma G proteins following stimulation of G protein-coupled receptors (GPCRs). Activation by GPCRs is assisted by the regulatory subunits (PIK3R5 or PIK3R6) leading to the translocation from the cytosol to the plasma membrane and to kinase activation. Inhibited by AS-604850 and AS-605240. Phosphoinositide-3-kinase (PI3K) that phosphorylates PtdIns(4,5)P2 (Phosphatidylinositol 4,5-bisphosphate) to generate phosphatidylinositol 3,4,5-trisphosphate (PIP3). PIP3 plays a key role by recruiting PH domain-containing proteins to the membrane, including AKT1 and PDPK1, activating signaling cascades involved in cell growth, survival, proliferation, motility and morphology. Links G-protein coupled receptor activation to PIP3 production. Involved in immune, inflammatory and allergic responses. Modulates leukocyte chemotaxis to inflammatory sites and in response to chemoattractant agents. May control leukocyte polarization and migration by regulating the spatial accumulation of PIP3 and by regulating the organization of F-actin formation and integrin-based adhesion at the leading edge. Controls motility of dendritic cells. Together with PIK3CD is involved in natural killer (NK) cell development and migration towards the sites of inflammation. Participates in T-lymphocyte migration. Regulates T-lymphocyte proliferation, activation, and cytokine production. Together with PIK3CD participates in T-lymphocyte development. Required for B-lymphocyte development and signaling. Together with PIK3CD participates in neutrophil respiratory burst. Together with PIK3CD is involved in neutrophil chemotaxis and extravasation. Together with PIK3CB promotes platelet aggregation and thrombosis. Regulates alpha-IIb/beta-3 integrins (ITGA2B/ ITGB3) adhesive function in platelets downstream of P2Y12 through a lipid kinase activity-independent mechanism. May have also a lipid kinase activity-dependent function in platelet aggregation. Involved in endothelial progenitor cell migration. Negative regulator of cardiac contractility. Modulates cardiac contractility by anchoring protein kinase A (PKA) and PDE3B activation, reducing cAMP levels. Regulates cardiac contractility also by promoting beta-adrenergic receptor internalization by binding to GRK2 and by non-muscle tropomyosin phosphorylation. Also has serine/threonine protein kinase activity: both lipid and protein kinase activities are required for beta-adrenergic receptor endocytosis. May also have a scaffolding role in modulating cardiac contractility. Contributes to cardiac hypertrophy under pathological stress. Through simultaneous binding of PDE3B to RAPGEF3 and PIK3R6 is assembled in a signaling complex in which the PI3K gamma complex is activated by RAPGEF3 and which is involved in angiogenesis. In neutrophils, participates in a phospholipase C-activating N-formyl peptide-activated GPCR (G protein-coupled receptor) signaling pathway downstream of RASGRP4-mediated Ras-activation, to promote neutrophil functional responses. The sequence is that of Phosphatidylinositol 4,5-bisphosphate 3-kinase catalytic subunit gamma isoform (PIK3CG) from Homo sapiens (Human).